The sequence spans 111 residues: uncharacterized protein (111 aa).

The protein belongs to the asfivirus E111R family.

This is an uncharacterized protein from Ornithodoros (relapsing fever ticks).